The chain runs to 321 residues: Methyltransferase cfoB (321 aa).

Belongs to the methyltransferase superfamily.

It participates in secondary metabolite biosynthesis; flavonoid biosynthesis. Functionally, methyltransferase; part of the gene cluster that mediates the biosynthesis of chlorflavonin, a fungal flavonoid with acetolactate synthase inhibitory activity. Within the pathway, cfoB is responsible for the methylation at position C7-OH of flavonoid. The pathway begins with the PKS-NRPS hybrid synthetase cfoA that uses benzoic acid or p-hydroxybenzoic acid as a starter unit with four rounds of chain elongation using malonyl-CoA to form the chalcone skeleton. Then, a new type of chalcone isomerase, cfoK, catalyzes the conversion of the chalcone into a flavanone by a histidine-mediated oxa-Michael addition mechanism. The desaturation of flavanone to flavone is catalyzed by a new type of flavone synthase, the flavin mononucleotide (FMN)-dependent oxidoreductase cfoJ. Monooxygenases cfoF, cfoG, and P450 cfoH are responsible for the hydroxylation of the flavonoid skeleton at sites C3, C8, and C2', respectively. Like cfoF, the dehydratase cfoI also plays a role in the hydroxylation of position C3. Methyltransferases cfoB, cfoC, and cfoD then catalyze the methylation of C7-OH, C8-OH, and C3-OH, respectively. Finally, the monooxygenase cfoE is responsible for the chlorination of flavonoid at position C3'. In Aspergillus candidus, this protein is Methyltransferase cfoB.